The chain runs to 113 residues: CRISPR-associated endoribonuclease Cas2 2 (113 aa).

Mg(2+) is bound at residue Asp32.

It belongs to the CRISPR-associated endoribonuclease Cas2 protein family. As to quaternary structure, homodimer, forms a heterotetramer with a Cas1 homodimer. It depends on Mg(2+) as a cofactor.

Functionally, CRISPR (clustered regularly interspaced short palindromic repeat), is an adaptive immune system that provides protection against mobile genetic elements (viruses, transposable elements and conjugative plasmids). CRISPR clusters contain sequences complementary to antecedent mobile elements and target invading nucleic acids. CRISPR clusters are transcribed and processed into CRISPR RNA (crRNA). Functions as a ssRNA-specific endoribonuclease. Involved in the integration of spacer DNA into the CRISPR cassette. This is CRISPR-associated endoribonuclease Cas2 2 (cas22) from Nitrosomonas europaea (strain ATCC 19718 / CIP 103999 / KCTC 2705 / NBRC 14298).